The following is a 269-amino-acid chain: Chymotrypsin-like elastase family member 2A (269 aa).

The signal sequence occupies residues 1 to 16 (MIRALLLSTLVAGALS). Residues 17 to 28 (CGVPTYPPQLSR) constitute a propeptide, activation peptide. In terms of domain architecture, Peptidase S1 spans 29 to 267 (VVGGEDARPN…YNDWISSVIE (239 aa)). C58 and C74 form a disulfide bridge. Catalysis depends on charge relay system residues H73 and D121. Intrachain disulfides connect C155/C222, C186/C202, and C212/C243. S216 functions as the Charge relay system in the catalytic mechanism.

It belongs to the peptidase S1 family. Elastase subfamily. Interacts with CPA1. Interacts with SERPINA1. As to expression, pancreas.

It localises to the secreted. The enzyme catalyses Preferential cleavage: Leu-|-Xaa, Met-|-Xaa and Phe-|-Xaa. Hydrolyzes elastin.. Its function is as follows. Elastase that enhances insulin signaling and might have a physiologic role in cellular glucose metabolism. Circulates in plasma and reduces platelet hyperactivation, triggers both insulin secretion and degradation, and increases insulin sensitivity. The sequence is that of Chymotrypsin-like elastase family member 2A (CELA2A) from Bos taurus (Bovine).